A 386-amino-acid polypeptide reads, in one-letter code: Formate-dependent phosphoribosylglycinamide formyltransferase (386 aa).

N(1)-(5-phospho-beta-D-ribosyl)glycinamide-binding positions include 15 to 16 and Glu75; that span reads EL. ATP is bound by residues Arg107, Lys148, 153–158, 188–191, and Glu196; these read SSGKGQ and EQFI. The 190-residue stretch at 112–301 folds into the ATP-grasp domain; the sequence is ALAAQQLNLQ…EFELHLRAIV (190 aa). Residues Glu260 and Glu272 each contribute to the Mg(2+) site. N(1)-(5-phospho-beta-D-ribosyl)glycinamide is bound by residues Asp279, Lys349, and 356–357; that span reads RR.

This sequence belongs to the PurK/PurT family. In terms of assembly, homodimer.

The catalysed reaction is N(1)-(5-phospho-beta-D-ribosyl)glycinamide + formate + ATP = N(2)-formyl-N(1)-(5-phospho-beta-D-ribosyl)glycinamide + ADP + phosphate + H(+). It functions in the pathway purine metabolism; IMP biosynthesis via de novo pathway; N(2)-formyl-N(1)-(5-phospho-D-ribosyl)glycinamide from N(1)-(5-phospho-D-ribosyl)glycinamide (formate route): step 1/1. Functionally, involved in the de novo purine biosynthesis. Catalyzes the transfer of formate to 5-phospho-ribosyl-glycinamide (GAR), producing 5-phospho-ribosyl-N-formylglycinamide (FGAR). Formate is provided by PurU via hydrolysis of 10-formyl-tetrahydrofolate. This Francisella tularensis subsp. tularensis (strain SCHU S4 / Schu 4) protein is Formate-dependent phosphoribosylglycinamide formyltransferase.